The primary structure comprises 483 residues: Regulatory protein ViaA (483 aa).

It belongs to the ViaA family. Homodimer. Interacts with RavA.

The protein resides in the cytoplasm. Functionally, component of the RavA-ViaA chaperone complex, which may act on the membrane to optimize the function of some of the respiratory chains. ViaA stimulates the ATPase activity of RavA. This is Regulatory protein ViaA from Cronobacter sakazakii (strain ATCC BAA-894) (Enterobacter sakazakii).